The primary structure comprises 412 residues: MKAISVLGSTGSIGTQTLQIAEEFPDQFKIVALTAGKNLDLVTKQIETHQPEVVSLADESLLPELTRRINSLNEDSKILKKPLLMAGAEGLNTAAAWGSADLVVTGIVGCAGLLPTLAAIEAGKDLALANKETLIAAGPVVIPALKKSGSRLLPADSEHSAIFQCLQGTPWADNARLSTGVPTPGFKSIQLTASGGAFRDWKAEDLVKATVEDATSHPNWSMGKKITVDSATLMNKGLEVIEAHYLFGLSYDQIEIIIHPQSIIHSMVELDDSSVLAQLGWPDMKLPILYCLSWPSRLKTPWPRLKLTQIGNLTFKEPDTNKYPCMELAYSAGKSGGTMPAVLNAANEKAVELFLEERFKFIDIPKVIEAICEKHKCDLNLNPSLSEILEIDNWAREEVLDYSEKNIKKMQF.

NADPH is bound by residues T10, G11, S12, I13, G36, K37, N38, and N130. K131 lines the 1-deoxy-D-xylulose 5-phosphate pocket. E132 serves as a coordination point for NADPH. D156 is a binding site for Mn(2+). Residues S157, E158, S194, and H217 each coordinate 1-deoxy-D-xylulose 5-phosphate. Residue E158 participates in Mn(2+) binding. G223 provides a ligand contact to NADPH. Positions 230, 235, 236, and 239 each coordinate 1-deoxy-D-xylulose 5-phosphate. Position 239 (E239) interacts with Mn(2+).

It belongs to the DXR family. The cofactor is Mg(2+). It depends on Mn(2+) as a cofactor.

It catalyses the reaction 2-C-methyl-D-erythritol 4-phosphate + NADP(+) = 1-deoxy-D-xylulose 5-phosphate + NADPH + H(+). It functions in the pathway isoprenoid biosynthesis; isopentenyl diphosphate biosynthesis via DXP pathway; isopentenyl diphosphate from 1-deoxy-D-xylulose 5-phosphate: step 1/6. Functionally, catalyzes the NADPH-dependent rearrangement and reduction of 1-deoxy-D-xylulose-5-phosphate (DXP) to 2-C-methyl-D-erythritol 4-phosphate (MEP). This chain is 1-deoxy-D-xylulose 5-phosphate reductoisomerase, found in Prochlorococcus marinus (strain NATL1A).